We begin with the raw amino-acid sequence, 225 residues long: UPF0758 protein BAMEG_4721 (225 aa).

One can recognise an MPN domain in the interval 103–225; sequence SIRSPEDCAT…FVSLKEKGHI (123 aa). Positions 174, 176, and 187 each coordinate Zn(2+). Positions 174-187 match the JAMM motif motif; that stretch reads HNHPSGDPAPSRED.

The protein belongs to the UPF0758 family.

This Bacillus anthracis (strain CDC 684 / NRRL 3495) protein is UPF0758 protein BAMEG_4721.